A 218-amino-acid polypeptide reads, in one-letter code: Large ribosomal subunit protein bL25 (218 aa).

The disordered stretch occupies residues 187-218; the sequence is SATAAVEEAKEDGAPEESAQGQGAAEAQETNK. Over residues 202 to 218 the composition is skewed to low complexity; that stretch reads EESAQGQGAAEAQETNK.

Belongs to the bacterial ribosomal protein bL25 family. CTC subfamily. Part of the 50S ribosomal subunit; part of the 5S rRNA/L5/L18/L25 subcomplex. Contacts the 5S rRNA. Binds to the 5S rRNA independently of L5 and L18.

Its function is as follows. This is one of the proteins that binds to the 5S RNA in the ribosome where it forms part of the central protuberance. The polypeptide is Large ribosomal subunit protein bL25 (Anaplasma marginale (strain St. Maries)).